The following is a 317-amino-acid chain: Testis-specific Y-encoded protein 1 (317 aa).

Disordered regions lie at residues 1–39 and 91–118; these read MSRP…FQVV and DEEQ…PGGP. Basic and acidic residues-rich tracts occupy residues 15 to 26 and 95 to 112; these read QGQEERERRSEE and EQRP…EQGQ.

The protein belongs to the nucleosome assembly protein (NAP) family. Phosphorylated. In terms of tissue distribution, testis. Probably in spermatogonia.

The protein resides in the cytoplasm. The protein localises to the nucleus. May be involved in sperm differentiation and proliferation. The chain is Testis-specific Y-encoded protein 1 (TSPY1) from Bos taurus (Bovine).